The sequence spans 431 residues: Urokinase-type plasminogen activator (431 aa).

The first 20 residues, 1–20 (MRALLARLLLCVLVVSDSKG), serve as a signal peptide directing secretion. One can recognise an EGF-like domain in the interval 27-63 (VPSNCDCLNGGTCVSNKYFSNIHWCNCPKKFGGQHCE). Cystine bridges form between Cys31-Cys39, Cys33-Cys51, Cys53-Cys62, Cys70-Cys151, Cys91-Cys133, and Cys122-Cys146. The tract at residues 34-57 (LNGGTCVSNKYFSNIHWCNCPKKF) is binds urokinase plasminogen activator surface receptor. Residues 69–151 (TCYEGNGHFY…LVQECMVHDC (83 aa)) form the Kringle domain. The interval 152-178 (ADGKKPSSPPEELKFQCGQKTLRPRFK) is connecting peptide. Ser158 carries the post-translational modification Phosphoserine. 6 disulfide bridges follow: Cys168–Cys299, Cys209–Cys225, Cys217–Cys288, Cys313–Cys382, Cys345–Cys361, and Cys372–Cys400. The 246-residue stretch at 179 to 424 (IVGGEFTTIE…FLPWIRSHTK (246 aa)) folds into the Peptidase S1 domain. Catalysis depends on charge relay system residues His224 and Asp275. The N-linked (GlcNAc...) asparagine glycan is linked to Asn322. A Phosphoserine modification is found at Ser323. The active-site Charge relay system is Ser376.

Belongs to the peptidase S1 family. Found in high and low molecular mass forms. Each consists of two chains, A and B. The high molecular mass form contains a long chain A which is cleaved to yield a short chain A. Forms heterodimer with SERPINA5. Binds LRP1B; binding is followed by internalization and degradation. Interacts with MRC2. Interacts with PLAUR. In complex with SERPINE1, interacts with PLAUR/uPAR. Interacts with SORL1 and LRP1, either alone or in complex with SERPINE1; these interactions are abolished in the presence of LRPAP1/RAP. The ternary complex composed of PLAUR-PLAU-PAI1 also interacts with SORLA. In terms of processing, phosphorylation of Ser-158 and Ser-323 abolishes proadhesive ability but does not interfere with receptor binding. Produced as an inactive single-chain protein (pro-uPA or sc-uPA), is processed into the active disulfide-linked two-chain form of PLAU/uPA by a proteolytic event mediated, at least, by TMPRSS4.

The protein localises to the secreted. The enzyme catalyses Specific cleavage of Arg-|-Val bond in plasminogen to form plasmin.. Inhibited by SERPINA5. Inhibited by SERPINE1. Its function is as follows. Specifically cleaves the zymogen plasminogen to form the active enzyme plasmin. This is Urokinase-type plasminogen activator (PLAU) from Pongo abelii (Sumatran orangutan).